The chain runs to 1116 residues: Error-prone DNA polymerase (1116 aa).

The protein belongs to the DNA polymerase type-C family. DnaE2 subfamily.

The protein localises to the cytoplasm. It catalyses the reaction DNA(n) + a 2'-deoxyribonucleoside 5'-triphosphate = DNA(n+1) + diphosphate. Functionally, DNA polymerase involved in damage-induced mutagenesis and translesion synthesis (TLS). It is not the major replicative DNA polymerase. The sequence is that of Error-prone DNA polymerase from Sinorhizobium medicae (strain WSM419) (Ensifer medicae).